The following is a 295-amino-acid chain: Elongation factor Ts (295 aa).

Positions 79–82 (TDFV) are involved in Mg(2+) ion dislocation from EF-Tu.

The protein belongs to the EF-Ts family.

It localises to the cytoplasm. In terms of biological role, associates with the EF-Tu.GDP complex and induces the exchange of GDP to GTP. It remains bound to the aminoacyl-tRNA.EF-Tu.GTP complex up to the GTP hydrolysis stage on the ribosome. The polypeptide is Elongation factor Ts (Bacillus cereus (strain B4264)).